We begin with the raw amino-acid sequence, 143 residues long: Actin-depolymerizing factor 5 (143 aa).

The region spanning 11 to 143 (GMNVKEECQR…GYDVIRGRAQ (133 aa)) is the ADF-H domain.

The protein belongs to the actin-binding proteins ADF family.

Actin-depolymerizing protein. Severs actin filaments (F-actin) and binds to actin monomers. The protein is Actin-depolymerizing factor 5 (ADF5) of Oryza sativa subsp. japonica (Rice).